Here is an 88-residue protein sequence, read N- to C-terminus: MEYKKRVDALVFFSLLLLGYFAAHAHGNGHVTDDVNVSAPAEEGILREKRAQCAQGFLPCKDNKCYCCIGGRTHDCYYTMAQCSHACF.

The first 27 residues, 1 to 27 (MEYKKRVDALVFFSLLLLGYFAAHAHG), serve as a signal peptide directing secretion. The N-linked (GlcNAc...) asparagine glycan is linked to N36. Intrachain disulfides connect C65-C87 and C68-C76.

It belongs to the MEG family. Post-translationally, glycosylated. In terms of tissue distribution, expressed exclusively in endosperm. Found in basal endosperm transfer cells.

The protein resides in the secreted. It is found in the cell wall. The protein localises to the cell membrane. Its subcellular location is the extracellular space. It localises to the extracellular matrix. Regulates maternal nutrient uptake, sucrose partitioning, and seed biomass yield. Necessary and sufficient for the establishment and differentiation of the endosperm nutrient transfer cells located at the mother:seed interface. Exclusive expression of the maternal allele at the early stages of endosperm development. The maternal allele is hypomethylated. At later stages, expression becomes biallelic. Regulated by the transcription factor MRP1. The polypeptide is Protein MATERNALLY EXPRESSED GENE 1 (MEG1) (Zea mays (Maize)).